Here is a 48-residue protein sequence, read N- to C-terminus: MVITSENDEDRGGQEKESKEESVLAMLGIIGTILNLIVIIFVYIYTTL.

A disordered region spans residues 1–20 (MVITSENDEDRGGQEKESKE). The span at 10–20 (DRGGQEKESKE) shows a compositional bias: basic and acidic residues. A helical transmembrane segment spans residues 24 to 44 (LAMLGIIGTILNLIVIIFVYI).

Interacts with ATPase ATP2A2/SERCA2. Interacts with ATPase ATP2A3/SERCA3; the interaction occurs at low levels in low glucose conditions and is increased by high glucose levels. Highly expressed in pancreatic islets where it is enriched in the insulin-producing beta cells.

Its subcellular location is the endoplasmic reticulum membrane. The protein resides in the extracellular vesicle membrane. Its function is as follows. In neurons, plays a role in the regulation of intracellular Ca(2+), possibly by acting as an activator of ATP2A2/SERCA2, thus increasing the efficiency with which Ca(2+) is removed from the cytoplasm. Inhibits differentiation of embryonic stem cells into neurons and inhibits neurite outgrowth, likely as a result of its role in intracellular Ca(2+) regulation. In pancreatic beta cells, lowers Ca(2+) levels in the endoplasmic reticulum and enhances glucose-stimulated insulin secretion. In Homo sapiens (Human), this protein is Protein TUNAR.